The following is a 111-amino-acid chain: VAVSADPNEPNVIVTRLTLVCSTAPGPLELDLTGDLESFKIKISFRYIQHTYRKGVKIDKTDYMVGSYGPRAEEYEFLTPMEEAPKGMLARFTDDDKTDHLSGERNLTIKK.

Residues Lys-57 and Lys-60 each participate in a glycyl lysine isopeptide (Lys-Gly) (interchain with G-Cter in SUMO1); alternate cross-link. Glycyl lysine isopeptide (Lys-Gly) (interchain with G-Cter in SUMO2); alternate cross-links involve residues Lys-57 and Lys-60. Position 60 is an N6-acetyllysine; alternate (Lys-60). Position 60 is an N6-succinyllysine; alternate (Lys-60).

This sequence belongs to the Rho GDI family. In terms of assembly, monomer. Interacts with FER. Interacts with PLXNB3. Forms a heterodimer with RAC1. Interacts with RHOA, the affinity is increased by three orders of magnitude when RHOA is prenylated. Interacts with PSMD10; the interaction increases ARHGDIA association with RHOA, leading to ARHGDIA-mediated inactivation of RHOA and ROCK and prolonged AKT activation. Interacts with KANK2; the interaction is direct and may regulate the interaction of ARHGDIA with RHOA, RAC1 and CDC42. Interacts with RHOC. Interacts with CDC42. Interacts with NGFR (via death domain); NGFR binding decreases the affinity for RHOA. In terms of processing, the N-terminus is blocked.

The protein localises to the cytoplasm. Functionally, controls Rho proteins homeostasis. Regulates the GDP/GTP exchange reaction of the Rho proteins by inhibiting the dissociation of GDP from them, and the subsequent binding of GTP to them. Retains Rho proteins such as CDC42, RAC1 and RHOA in an inactive cytosolic pool, regulating their stability and protecting them from degradation. Actively involved in the recycling and distribution of activated Rho GTPases in the cell, mediates extraction from membranes of both inactive and activated molecules due its exceptionally high affinity for prenylated forms. Through the modulation of Rho proteins, may play a role in cell motility regulation. In glioma cells, inhibits cell migration and invasion by mediating the signals of SEMA5A and PLXNB3 that lead to inactivation of RAC1. The protein is Rho GDP-dissociation inhibitor 1 (ARHGDIA) of Cavia porcellus (Guinea pig).